Consider the following 541-residue polypeptide: Putative nucleobase-ascorbate transporter 10 (541 aa).

The next 12 membrane-spanning stretches (helical) occupy residues 52 to 72 (LLSL…MGGG), 79 to 99 (VIQT…FFGT), 101 to 121 (LPVI…IIYS), 141 to 161 (IQGA…LGVW), 173 to 193 (IAPL…PLLA), 196 to 216 (VEVG…LPRF), 235 to 255 (GMIL…SSGV), 299 to 319 (SFAM…LFYA), 376 to 396 (RVIQ…KFGA), 397 to 417 (FFAS…LCFV), 433 to 453 (FNIK…PQYF), and 476 to 496 (VIFM…DCTL).

Belongs to the nucleobase:cation symporter-2 (NCS2) (TC 2.A.40) family.

The protein localises to the membrane. In Arabidopsis thaliana (Mouse-ear cress), this protein is Putative nucleobase-ascorbate transporter 10 (NAT10).